The chain runs to 74 residues: Protein translocase subunit SecE (74 aa).

Topologically, residues 1 to 36 are cytoplasmic; sequence MKTDFNQKIEQLKEFIEECRRVWLVLKKPTKDEYLA. A helical membrane pass occupies residues 37 to 62; sequence VAKVTALGISLLGIIGYIIHVPATYI. Over 63-74 the chain is Extracellular; the sequence is KGILKPPTTPRV.

The protein belongs to the SecE/SEC61-gamma family. In terms of assembly, component of the Sec protein translocase complex. Heterotrimer consisting of alpha (SecY), beta (SecG) and gamma (SecE) subunits. The heterotrimers can form oligomers, although 1 heterotrimer is thought to be able to translocate proteins. Interacts with the ribosome. May interact with SecDF, and other proteins may be involved.

It localises to the cell membrane. In terms of biological role, essential subunit of the protein translocation channel SecYEG. Clamps together the 2 halves of SecY. May contact the channel plug during translocation. This Methanocaldococcus jannaschii (strain ATCC 43067 / DSM 2661 / JAL-1 / JCM 10045 / NBRC 100440) (Methanococcus jannaschii) protein is Protein translocase subunit SecE.